Consider the following 132-residue polypeptide: Protein NrdI (132 aa).

Belongs to the NrdI family.

Probably involved in ribonucleotide reductase function. The protein is Protein NrdI of Staphylococcus aureus (strain Mu3 / ATCC 700698).